A 262-amino-acid polypeptide reads, in one-letter code: 3-methyl-2-oxobutanoate hydroxymethyltransferase (262 aa).

Positions 44 and 83 each coordinate Mg(2+). Residues 44–45, aspartate 83, and lysine 113 each bind 3-methyl-2-oxobutanoate; that span reads DS. Glutamate 115 serves as a coordination point for Mg(2+). The active-site Proton acceptor is the glutamate 182.

It belongs to the PanB family. In terms of assembly, homodecamer; pentamer of dimers. It depends on Mg(2+) as a cofactor.

It localises to the cytoplasm. The enzyme catalyses 3-methyl-2-oxobutanoate + (6R)-5,10-methylene-5,6,7,8-tetrahydrofolate + H2O = 2-dehydropantoate + (6S)-5,6,7,8-tetrahydrofolate. It functions in the pathway cofactor biosynthesis; (R)-pantothenate biosynthesis; (R)-pantoate from 3-methyl-2-oxobutanoate: step 1/2. Catalyzes the reversible reaction in which hydroxymethyl group from 5,10-methylenetetrahydrofolate is transferred onto alpha-ketoisovalerate to form ketopantoate. The protein is 3-methyl-2-oxobutanoate hydroxymethyltransferase of Picosynechococcus sp. (strain ATCC 27264 / PCC 7002 / PR-6) (Agmenellum quadruplicatum).